Reading from the N-terminus, the 242-residue chain is Phosphoribosylaminoimidazole-succinocarboxamide synthase (242 aa).

Belongs to the SAICAR synthetase family.

It carries out the reaction 5-amino-1-(5-phospho-D-ribosyl)imidazole-4-carboxylate + L-aspartate + ATP = (2S)-2-[5-amino-1-(5-phospho-beta-D-ribosyl)imidazole-4-carboxamido]succinate + ADP + phosphate + 2 H(+). It participates in purine metabolism; IMP biosynthesis via de novo pathway; 5-amino-1-(5-phospho-D-ribosyl)imidazole-4-carboxamide from 5-amino-1-(5-phospho-D-ribosyl)imidazole-4-carboxylate: step 1/2. The polypeptide is Phosphoribosylaminoimidazole-succinocarboxamide synthase (Cyanothece sp. (strain PCC 7425 / ATCC 29141)).